The primary structure comprises 315 residues: Putative S-adenosyl-L-methionine-dependent methyltransferase MAV_4557 (315 aa).

Residues Asp-134 and 163–164 each bind S-adenosyl-L-methionine; that span reads DL.

The protein belongs to the UPF0677 family.

Its function is as follows. Exhibits S-adenosyl-L-methionine-dependent methyltransferase activity. The chain is Putative S-adenosyl-L-methionine-dependent methyltransferase MAV_4557 from Mycobacterium avium (strain 104).